A 208-amino-acid chain; its full sequence is Uracil phosphoribosyltransferase (208 aa).

5-phospho-alpha-D-ribose 1-diphosphate is bound by residues Arg78, Arg103, and 130–138 (DPMLATGGS). Uracil-binding positions include Ile193 and 198-200 (GDA). Asp199 provides a ligand contact to 5-phospho-alpha-D-ribose 1-diphosphate.

The protein belongs to the UPRTase family. Mg(2+) serves as cofactor.

It carries out the reaction UMP + diphosphate = 5-phospho-alpha-D-ribose 1-diphosphate + uracil. It functions in the pathway pyrimidine metabolism; UMP biosynthesis via salvage pathway; UMP from uracil: step 1/1. Allosterically activated by GTP. In terms of biological role, catalyzes the conversion of uracil and 5-phospho-alpha-D-ribose 1-diphosphate (PRPP) to UMP and diphosphate. This chain is Uracil phosphoribosyltransferase, found in Shewanella sp. (strain ANA-3).